The primary structure comprises 405 residues: Saccharopepsin (405 aa).

An N-terminal signal peptide occupies residues 1–22 (MFSLKALLPLALLLVSANQVAA). A propeptide spans 23–76 (KVHKAKIYKHELSDEMKEVTFEQHLAHLGQKYLTQFEKANPEVVFSREHPFFTE) (activation peptide). Positions 91–402 (YYTDITLGTP…DLGNNAVGLA (312 aa)) constitute a Peptidase A1 domain. The active site involves Asp-109. Cys-122 and Cys-127 form a disulfide bridge. Asn-144 is a glycosylation site (N-linked (GlcNAc...) asparagine). The active site involves Asp-294. The cysteines at positions 328 and 361 are disulfide-linked. Asn-345 is a glycosylation site (N-linked (GlcNAc...) asparagine).

It belongs to the peptidase A1 family.

It is found in the vacuole. The enzyme catalyses Hydrolysis of proteins with broad specificity for peptide bonds. Cleaves -Leu-Leu-|-Val-Tyr- bond in a synthetic substrate. Does not act on esters of Tyr or Arg.. Its function is as follows. Aspartyl protease implicated in the post-translational regulation of S.cerevisiae vacuolar proteinases. Acts on YSCB, on YSCY and on itself. This chain is Saccharopepsin (PEP4), found in Saccharomyces cerevisiae (strain ATCC 204508 / S288c) (Baker's yeast).